The sequence spans 430 residues: Cell division protein FtsZ (430 aa).

GTP is bound by residues 76–80, 163–165, Glu194, Arg198, and Asp242; these read GGGCN and GTG. The interval 374–418 is disordered; sequence KEKPQAKTSSKPVLSGPPAGVETVPSTTTPEDPLGEIPMAPELDI.

This sequence belongs to the FtsZ family. In terms of assembly, homodimer. Polymerizes to form a dynamic ring structure in a strictly GTP-dependent manner. Interacts directly with several other division proteins.

It is found in the cytoplasm. Essential cell division protein that forms a contractile ring structure (Z ring) at the future cell division site. The regulation of the ring assembly controls the timing and the location of cell division. One of the functions of the FtsZ ring is to recruit other cell division proteins to the septum to produce a new cell wall between the dividing cells. Binds GTP and shows GTPase activity. The sequence is that of Cell division protein FtsZ from Synechocystis sp. (strain ATCC 27184 / PCC 6803 / Kazusa).